The chain runs to 305 residues: MTEKLLEIKHLKQHFVTPRGTVKAVDDLSFDIYKGETLGLVGESGCGKSTTGRSIIRLYEATDGEVLFNGENVHGRKSRKKLLEFNRKMQMIFQDPYASLNPRMTVADIIAEGLDIHKLAKTKKERMQRVHELLETVGLNKEHANRYPHEFSGGQRQRIGIARALAVDPEFIIADEPISALDVSIQAQVVNLMKELQKEKGLTYLFIAHDLSMVKYISDRIGVMYFGKLVELAPADELYENPLHPYTKSLLSAIPLPDPDYERNRVRQKYDPSVHQLKDGETMEFREVKPGHFVMCTEAEFKAFS.

Positions 6 to 251 constitute an ABC transporter domain; sequence LEIKHLKQHF…PLHPYTKSLL (246 aa). Residue 42–49 coordinates ATP; it reads GESGCGKS.

This sequence belongs to the ABC transporter superfamily. As to quaternary structure, the complex is composed of two ATP-binding proteins (OppD and OppF), two transmembrane proteins (OppB and OppC) and a solute-binding protein (OppA).

Its subcellular location is the cell membrane. It catalyses the reaction a [peptide](out) + ATP + H2O = a [peptide](in) + ADP + phosphate + H(+). In terms of biological role, part of the ABC transporter complex OppABCDF involved in the uptake of oligopeptides. Probably responsible for energy coupling to the transport system. Required for genetic competence but not for peptide transport or for sporulation. This Bacillus subtilis (strain 168) protein is Oligopeptide transport ATP-binding protein OppF.